The primary structure comprises 726 residues: Probable dipeptidyl-peptidase 5 (726 aa).

Residues 1–19 (MAAAKWLIASLAFASSGLA) form the signal peptide. N-linked (GlcNAc...) asparagine glycans are attached at residues Asn-96 and Asn-252. Positions 269–291 (AEPINKRNGPRTPQGIEGASSSP) are disordered. Asn-485 carries N-linked (GlcNAc...) asparagine glycosylation. The active-site Charge relay system is the Ser-558. A glycan (N-linked (GlcNAc...) asparagine) is linked at Asn-605. Active-site charge relay system residues include Asp-641 and His-673. N-linked (GlcNAc...) asparagine glycosylation is present at Asn-699.

The protein belongs to the peptidase S9C family.

It is found in the secreted. Extracellular dipeptidyl-peptidase which removes N-terminal dipeptides sequentially from polypeptides having unsubstituted N-termini. Contributes to pathogenicity. In Arthroderma benhamiae (strain ATCC MYA-4681 / CBS 112371) (Trichophyton mentagrophytes), this protein is Probable dipeptidyl-peptidase 5 (DPP5).